A 133-amino-acid chain; its full sequence is Thioredoxin-2, mitochondrial (133 aa).

The N-terminal 29 residues, 1-29, are a transit peptide targeting the mitochondrion; sequence MRGFIANSLKPHMRSFALRRSFTSSRILR. Residues 30–133 enclose the Thioredoxin domain; the sequence is KVNAVESFGD…LSSLLAKYQE (104 aa). Active-site nucleophile residues include cysteine 59 and cysteine 62. Cysteine 59 and cysteine 62 are oxidised to a cystine.

This sequence belongs to the thioredoxin family. Interacts with arg3.

The protein resides in the mitochondrion. Its function is as follows. Disulfide reductase which serves multiple functions in mitochondria, protecting mitochondrial components against thiol-oxidative damage as a thiol-disulfide oxidoreductase, and supporting urea cycle and respiration in mitochondria in a manner independent of active site thiols. The sequence is that of Thioredoxin-2, mitochondrial (trx2) from Schizosaccharomyces pombe (strain 972 / ATCC 24843) (Fission yeast).